Consider the following 249-residue polypeptide: Putative S-adenosyl-L-methionine-dependent methyltransferase Mkms_0592 (249 aa).

S-adenosyl-L-methionine contacts are provided by residues D111 and 141 to 142 (DL).

Belongs to the UPF0677 family.

Functionally, exhibits S-adenosyl-L-methionine-dependent methyltransferase activity. This is Putative S-adenosyl-L-methionine-dependent methyltransferase Mkms_0592 from Mycobacterium sp. (strain KMS).